A 252-amino-acid polypeptide reads, in one-letter code: Hydroxyacylglutathione hydrolase (252 aa).

Residues His-54, His-56, Asp-58, His-59, His-111, Asp-128, and His-166 each contribute to the Zn(2+) site.

This sequence belongs to the metallo-beta-lactamase superfamily. Glyoxalase II family. In terms of assembly, monomer. Zn(2+) is required as a cofactor.

The catalysed reaction is an S-(2-hydroxyacyl)glutathione + H2O = a 2-hydroxy carboxylate + glutathione + H(+). Its pathway is secondary metabolite metabolism; methylglyoxal degradation; (R)-lactate from methylglyoxal: step 2/2. Thiolesterase that catalyzes the hydrolysis of S-D-lactoyl-glutathione to form glutathione and D-lactic acid. The polypeptide is Hydroxyacylglutathione hydrolase (Vibrio campbellii (strain ATCC BAA-1116)).